Here is a 620-residue protein sequence, read N- to C-terminus: MAENNGAVPPGCKLPAGGFFGRLHVLVVDDDAAYLEELKLMLLLAGYAVTGKTTAEEALKEVDQNPEDYFHIVMTDVHMSGMDGFDLLHRINGRVPVIMFSEGEDVVMVMRTVMNGACDYMVKPMTSEAIKFIWKHVLRWRLSALPANASSSLQPSDHLAAALAAVAPPPPPAVQLPAAPAQAGNRDGEAHEEAELSTQPPALVPSGVQEAAAAVWSSRGDGQEAPPPAVAAAAKAPSKKRGASEVSDRGSNNLEATTGRKKVRTRFTWTTVSHTSFVRAYEQLKDQEGPKKIKQLMELDGIFVTKTQVSSHLQKYRSWLENERKKEEATSSSPCNPLSYTNCLDRGYSTWKQSSVITEGQQSSSFSGRPIHSMATSNGCLTTTDTQAGNYVGVGAKEIENFISSHQRSLGTAIGQESTIEQASLHSEITSVSRDAHENGNSQARGSAMSNGTSGTRGVLVTNENLLHVVSASLPSNMGQPTQPSQSFCTNELAANYSIISDQNPGTSHPTSSSAINNQNSKTQEMSVSQTVELGCGNDVMLDWPELVGLEDQLDNDVLMNSFFDGDLLQQGVVTAIDGTQEMLAFDSTGDLGSVPPRGLNNEIASHENTNGKNGASSGP.

One can recognise a Response regulatory domain in the interval 24-138 (HVLVVDDDAA…AIKFIWKHVL (115 aa)). 4-aspartylphosphate is present on Asp76. Disordered regions lie at residues 171–197 (PPAV…AELS) and 215–257 (VWSS…LEAT). The myb-like GARP DNA-binding region spans 261 to 321 (KKVRTRFTWT…HLQKYRSWLE (61 aa)). A compositionally biased stretch (polar residues) spans 431 to 456 (SVSRDAHENGNSQARGSAMSNGTSGT). 3 disordered regions span residues 431–457 (SVSR…SGTR), 501–523 (SDQN…NSKT), and 596–620 (PPRG…SSGP). Residues 603–620 (EIASHENTNGKNGASSGP) show a composition bias toward polar residues.

Belongs to the ARR family. Type-B subfamily. Post-translationally, two-component system major event consists of a His-to-Asp phosphorelay between a sensor histidine kinase (HK) and a response regulator (RR). In plants, the His-to-Asp phosphorelay involves an additional intermediate named Histidine-containing phosphotransfer protein (HPt). This multistep phosphorelay consists of a His-Asp-His-Asp sequential transfer of a phosphate group between first a His and an Asp of the HK protein, followed by the transfer to a conserved His of the HPt protein and finally the transfer to an Asp in the receiver domain of the RR protein.

It localises to the nucleus. Functionally, transcriptional activator that binds specific DNA sequence. Functions as a response regulator involved in His-to-Asp phosphorelay signal transduction system. Phosphorylation of the Asp residue in the receiver domain activates the ability of the protein to promote the transcription of target genes. May directly activate some type-A response regulators in response to cytokinins. The sequence is that of Two-component response regulator ORR27 from Oryza sativa subsp. japonica (Rice).